The following is a 262-amino-acid chain: uncharacterized protein (262 aa).

The 65-residue stretch at 6-70 (LRINQFLAHY…LKNKKFSVLV (65 aa)) folds into the S4 RNA-binding domain. The active-site Nucleophile is the Asp-108.

Belongs to the pseudouridine synthase RsuA family.

It carries out the reaction a uridine in RNA = a pseudouridine in RNA. This is an uncharacterized protein from Helicobacter pylori (strain ATCC 700392 / 26695) (Campylobacter pylori).